A 236-amino-acid chain; its full sequence is Small ribosomal subunit protein uS3 (236 aa).

A KH type-2 domain is found at Val39 to Arg107.

The protein belongs to the universal ribosomal protein uS3 family. As to quaternary structure, part of the 30S ribosomal subunit. Forms a tight complex with proteins S10 and S14.

Binds the lower part of the 30S subunit head. Binds mRNA in the 70S ribosome, positioning it for translation. In Blochmanniella pennsylvanica (strain BPEN), this protein is Small ribosomal subunit protein uS3.